A 423-amino-acid chain; its full sequence is Cytochrome b mRNA maturase bI2 (423 aa).

The Mitochondrial matrix segment spans residues 1–31 (MAFRKSNVYLSLVNSYIIDSPQPSSINYWWN). The cytochrome b stretch occupies residues 1-143 (MAFRKSNVYL…CVYGQMSHWG (143 aa)). The helical transmembrane segment at 32–52 (MGSLLGLCLVIQIVTGIFMAM) threads the bilayer. The Mitochondrial intermembrane portion of the chain corresponds to 53 to 84 (HYSSNIELAFSSVEHIMRDVHNGYILRYLHAN). A helical membrane pass occupies residues 85–105 (GASFFFMVMFMHMAKGLYYGS). The Mitochondrial matrix portion of the chain corresponds to 106 to 115 (YRSPRVTLWN). Residues 116–136 (VGVIIFILTIATAFLGYCCVY) form a helical membrane-spanning segment. Topologically, residues 137 to 153 (GQMSHWGNMNIASNMFN) are mitochondrial intermembrane. Positions 144-423 (NMNIASNMFN…SMKYKLGNYL (280 aa)) are maturase. A helical membrane pass occupies residues 154–174 (MMKTIYMMMLMLLIYIFYTIM). Over 175–423 (MRQMMKTKEY…SMKYKLGNYL (249 aa)) the chain is Mitochondrial matrix.

The protein in the N-terminal section; belongs to the cytochrome b family. It in the C-terminal section; belongs to the LAGLIDADG endonuclease family.

It is found in the mitochondrion inner membrane. Its function is as follows. This protein is responsible for splicing and maturation of cytochrome b mRNA. Specifically, it may be responsible for the splicing specificity of the second intron. This chain is Cytochrome b mRNA maturase bI2 (BI2), found in Saccharomyces cerevisiae (strain ATCC 204508 / S288c) (Baker's yeast).